Here is a 142-residue protein sequence, read N- to C-terminus: Dynein light chain Tctex-type protein 2B (142 aa).

Belongs to the dynein light chain Tctex-type family. As to quaternary structure, light chain of the cytoplasmic dynein complex 2, a multisubunit complex composed at least of eleven different proteins. The cytoplasmic dynein 2 complex consists of two catalytic heavy chains (HCs) and a number of non-catalytic subunits presented by intermediate chains (ICs), light intermediate chains (LICs) and light chains (LCs). Among them, a heavy chain (DYNC2H1), two intermediate chains (DYNC2I2 and DYNC2I1), a light intermediate chain (DYNC2LI1), and a light chain (DYNLT2B) are unique to the dynein-2 complex, but a subset of the light chains are also shared by dynein-1 and dynein-2 complexes. Interacts with DYNC2I1. The dimer DYNLT2B-DYNLT1/DYNLT3 interacts with DYNC2I1; this interaction is crucial for retrograde trafficking of ciliary proteins.

It is found in the dynein axonemal particle. Acts as one of several non-catalytic accessory components of the cytoplasmic dynein 2 complex (dynein-2 complex), a motor protein complex that drives the movement of cargos along microtubules within cilia and flagella in concert with the intraflagellar transport (IFT) system. Required for proper retrograde ciliary transport. The polypeptide is Dynein light chain Tctex-type protein 2B (Homo sapiens (Human)).